The chain runs to 361 residues: Feruloyl CoA ortho-hydroxylase 1 (361 aa).

Positions 204–312 constitute a Fe2OG dioxygenase domain; sequence TKESLFMGSI…RISVPIFVNP (109 aa). Tyr220 provides a ligand contact to 2-oxoglutarate. 3 residues coordinate Fe cation: His235, Asp237, and His293. Arg303 and Ser305 together coordinate 2-oxoglutarate.

Belongs to the iron/ascorbate-dependent oxidoreductase family. L-ascorbate serves as cofactor. Fe(2+) is required as a cofactor. As to expression, highly expressed in roots, especially in the cortex.

The catalysed reaction is (E)-feruloyl-CoA + 2-oxoglutarate + O2 = (E)-6-hydroxyferuloyl-CoA + succinate + CO2. The enzyme catalyses (E)-6-hydroxyferuloyl-CoA = scopoletin + CoA. It participates in phenylpropanoid metabolism. Functionally, 2-oxoglutarate (OG)- and Fe(II)-dependent dioxygenase (2OGD) involved in scopoletin biosynthesis. Converts feruloyl CoA into 6'-hydroxyferuloyl CoA but has no activity with ferulic acid, feruloylquinic acid, caffeic acid, caffeoyl CoA, p-coumaric acid, cinnamic acid, cinnamoyl CoA or benzoyl CoA. Required for the production and secretion of compounds (e.g. fluorescent coumarins) that facilitate the mobilization and uptake of iron from sources with low bioavailability or in high pH-induced iron deficiency conditions. Involved in the pathway of sideretin biosynthesis from feruloyl CoA, a redox-active catecholic metabolite exuded by roots in response to iron deficiency in order to facilitate the uptake of iron; this pathway consists in the successive conversion from feruloyl CoA to scopoletin, from scopoletin to fraxetin and from fraxetin to sideretin. Catalyzes the biosynthesis of scopoletin from feruloyl CoA. The chain is Feruloyl CoA ortho-hydroxylase 1 from Arabidopsis thaliana (Mouse-ear cress).